A 532-amino-acid chain; its full sequence is Chondroitin sulfate N-acetylgalactosaminyltransferase 1 (532 aa).

The Cytoplasmic portion of the chain corresponds to 1 to 14; the sequence is MMMVRRGLLAWISR. The helical; Signal-anchor for type II membrane protein transmembrane segment at 15-35 threads the bilayer; that stretch reads VVVLLVLLCCAISVLYMLACT. The Lumenal segment spans residues 36 to 532; the sequence is PKGDEEQLAL…QKQKTSSKKT (497 aa). The stretch at 57–100 forms a coiled coil; the sequence is YQAVLQEWEEQHRNYVSSLKRQIAQLKEELQERSEQLRNGQYQA. Asn315 and Asn324 each carry an N-linked (GlcNAc...) asparagine glycan. The a divalent metal cation site is built by Asp360 and His477.

The protein belongs to the chondroitin N-acetylgalactosaminyltransferase family. Post-translationally, N-glycosylated. In terms of tissue distribution, ubiquitous, with the highest levels in placenta, thyroid, bladder, prostate and adrenal gland. Detected at low levels in the other tissues examined.

Its subcellular location is the golgi apparatus. The protein resides in the golgi stack membrane. It catalyses the reaction 3-O-(beta-D-GlcA-(1-&gt;3)-beta-D-Gal-(1-&gt;3)-beta-D-Gal-(1-&gt;4)-beta-D-Xyl)-L-seryl-[protein] + UDP-N-acetyl-alpha-D-galactosamine = 3-O-(beta-D-GalNAc-(1-&gt;4)-beta-D-GlcA-(1-&gt;3)-beta-D-Gal-(1-&gt;3)-beta-D-Gal-(1-&gt;4)-beta-D-Xyl)-L-seryl-[protein] + UDP + H(+). Its function is as follows. Transfers 1,4-N-acetylgalactosamine (GalNAc) from UDP-GalNAc to the non-reducing end of glucuronic acid (GlcUA). Required for addition of the first GalNAc to the core tetrasaccharide linker and for elongation of chondroitin chains. Important role in chondroitin chain biosynthesis in cartilage formation and subsequent endochondral ossification. Moreover, is involved in the metabolism of aggrecan. The polypeptide is Chondroitin sulfate N-acetylgalactosaminyltransferase 1 (Homo sapiens (Human)).